The sequence spans 572 residues: Hemagglutinin-neuraminidase (572 aa).

Over 1 to 31 the chain is Intravirion; it reads MEYWKHTNHGKDAGNELETSMATHGNKLTNK. The chain crosses the membrane as a helical span at residues 32–52; the sequence is IIYILWTIILVLLSIVFIIVL. The Virion surface segment spans residues 53-572; sequence INSIKSEKAH…FKTEIPKSCS (520 aa). 2 disulfide bridges follow: C190–C214 and C256–C269. The interval 252–257 is involved in neuraminidase activity; it reads NRKSCS. N-linked (GlcNAc...) asparagine; by host glycans are attached at residues N308 and N351. Intrachain disulfides connect C355-C469 and C463-C473. An N-linked (GlcNAc...) asparagine; by host glycan is attached at N523. C535 and C544 are disulfide-bonded.

The protein belongs to the paramyxoviruses hemagglutinin-neuraminidase family. Homotetramer; composed of disulfide-linked homodimers. Interacts with F protein trimer.

It is found in the virion membrane. Its subcellular location is the host cell membrane. The enzyme catalyses Hydrolysis of alpha-(2-&gt;3)-, alpha-(2-&gt;6)-, alpha-(2-&gt;8)- glycosidic linkages of terminal sialic acid residues in oligosaccharides, glycoproteins, glycolipids, colominic acid and synthetic substrates.. Attaches the virus to sialic acid-containing cell receptors and thereby initiating infection. Binding of HN protein to the receptor induces a conformational change that allows the F protein to trigger virion/cell membranes fusion. Its function is as follows. Neuraminidase activity ensures the efficient spread of the virus by dissociating the mature virions from the neuraminic acid containing glycoproteins. This is Hemagglutinin-neuraminidase (HN) from Homo sapiens (Human).